The chain runs to 237 residues: MKKTLLTLLFGCVVTAQAQDIIVMEPSYPPFEMTEEKGEIIGFDVDIANAICKEMNANCTFHSQPFDSLIQSLKQKQFDAAISGMGITEPRKKQVLFSEPYFPSSAAFIAKKDTDFAKVKTIGVQNGTTYQHYLAKEKKEYNVKSYASYQNAILDVQNGRIDAIFGDVPVLAEMARKHEGLDFVGEKINNPNYFGDGLGIATHLKNQVLVDQFNAALKTIKENGEYQKIYDKWMGGK.

A signal peptide spans 1–18 (MKKTLLTLLFGCVVTAQA).

This sequence belongs to the bacterial solute-binding protein 3 family.

It localises to the periplasm. Binds arginine; part of the arginine periplasmic transport system. The chain is Arginine-binding periplasmic protein (lapT) from Mannheimia haemolytica (Pasteurella haemolytica).